Reading from the N-terminus, the 283-residue chain is 4-diphosphocytidyl-2-C-methyl-D-erythritol kinase (283 aa).

Lys-13 is a catalytic residue. 96–106 (PMGGGIGGGSS) contributes to the ATP binding site. Asp-138 is a catalytic residue.

The protein belongs to the GHMP kinase family. IspE subfamily.

It carries out the reaction 4-CDP-2-C-methyl-D-erythritol + ATP = 4-CDP-2-C-methyl-D-erythritol 2-phosphate + ADP + H(+). It functions in the pathway isoprenoid biosynthesis; isopentenyl diphosphate biosynthesis via DXP pathway; isopentenyl diphosphate from 1-deoxy-D-xylulose 5-phosphate: step 3/6. Its function is as follows. Catalyzes the phosphorylation of the position 2 hydroxy group of 4-diphosphocytidyl-2C-methyl-D-erythritol. This chain is 4-diphosphocytidyl-2-C-methyl-D-erythritol kinase, found in Pseudomonas fluorescens (strain Pf0-1).